A 317-amino-acid polypeptide reads, in one-letter code: Transaldolase (317 aa).

The Schiff-base intermediate with substrate role is filled by Lys132.

It belongs to the transaldolase family. Type 1 subfamily. In terms of assembly, homodimer.

The protein localises to the cytoplasm. It catalyses the reaction D-sedoheptulose 7-phosphate + D-glyceraldehyde 3-phosphate = D-erythrose 4-phosphate + beta-D-fructose 6-phosphate. It functions in the pathway carbohydrate degradation; pentose phosphate pathway; D-glyceraldehyde 3-phosphate and beta-D-fructose 6-phosphate from D-ribose 5-phosphate and D-xylulose 5-phosphate (non-oxidative stage): step 2/3. Functionally, transaldolase is important for the balance of metabolites in the pentose-phosphate pathway. This Shewanella frigidimarina (strain NCIMB 400) protein is Transaldolase.